Reading from the N-terminus, the 742-residue chain is MEEEVQQHSHCVNCVSRRCMTRPEPGVSCDLIGCPLVCGAVFHSCKADEHRLLCPFERVPCLNSNFGCPFTLARNKVAEHLEMCPASVVCCTMEWNRWPVSYSDRKSYESLSRDADEVSQLDMALALQDQRMLLESLKVATMMSKATGKISKPREQISVNSSVQEVPRANGLVSADEESYGALYEATVETTRSLAAALDILNSATRDIGMLNTSLQGTTNEMDEESNRESSQDRNAKDQDHLDEGEIGAVGGIDYTGTSQNAQAEQNGSSDLLCNLNTSSYDTSALCNGFPLEKMCTQVKDQDQNFHGDSTESNITNGDCVEADGTSEPPSSLLVAEQLKEGSALPDSTYQHILMPDEDDDEDLCWKKDLGDSKDVNGSPLSHATSFKFLSNSWYIPKEDKAVDTSDLEVAEDPMGLQGIDLITAALLFCLGDSPGGRGISDSRMVDVYHVDFGTQTFSLPSAILATNTMVGEIASASACDHANPQLSNPSPFQTLGLDLVLECVARYQPKQRSMFTFVCGQLFRRKEFSSHFKNVHGDIHAGLNGWMEQRCPLAYYGCTYSQRRFCPSTQGAKIIHDRHLRSFGVQPCVSTALEEPSRNCVLGLRSDHLSSLPFEVLQHIAGFLDGFSLCQLACVSRLMRDICGSLLQSRGMVILQWGKKKYPEGNSSWQIKEKVWRFSTAFCSVNDWKFADILSMADHLKKCSYNVIEKREEAIPLPCMCVTRELTKEGRSLRSVLKPVL.

The TRAF-type zinc finger occupies 49–108 (EHRLLCPFERVPCLNSNFGCPFTLARNKVAEHLEMCPASVVCCTMEWNRWPVSYSDRKSY). The tract at residues 214–242 (SLQGTTNEMDEESNRESSQDRNAKDQDHL) is disordered. Over residues 225-242 (ESNRESSQDRNAKDQDHL) the composition is skewed to basic and acidic residues. Phosphoserine is present on Ser379. The 47-residue stretch at 607-653 (SDHLSSLPFEVLQHIAGFLDGFSLCQLACVSRLMRDICGSLLQSRGM) folds into the F-box domain.

In terms of assembly, part of a SCF (SKP1-cullin-F-box) protein ligase complex. Interacts with SKP1, CUL1 and RBX1/ROC1. Post-translationally, auto-ubiquitinated. May be neddylated. Neddylation may be required for E3 ligase activity.

Its pathway is protein modification; protein ubiquitination. In terms of biological role, substrate-recognition component of the SCF (SKP1-CUL1-F-box protein)-type E3 ubiquitin ligase complex. Required for muscle atrophy following denervation. This chain is F-box only protein 30 (Fbxo30), found in Rattus norvegicus (Rat).